Here is a 161-residue protein sequence, read N- to C-terminus: PTS system glucose-specific EIIA component (161 aa).

A PTS EIIA type-1 domain is found at 31-135 (DPVFSKKIVG…SILTPVVISN (105 aa)). Residues His-68 and His-83 each coordinate Zn(2+). The Tele-phosphohistidine intermediate; for EIIA activity role is filled by His-83. A Phosphohistidine; by HPr modification is found at His-83.

The cofactor is Zn(2+).

It localises to the cytoplasm. In terms of biological role, the phosphoenolpyruvate-dependent sugar phosphotransferase system (sugar PTS), a major carbohydrate active transport system, catalyzes the phosphorylation of incoming sugar substrates concomitantly with their translocation across the cell membrane. The enzyme II complex composed of PtsG and Crr is involved in glucose transport. The protein is PTS system glucose-specific EIIA component (crr) of Buchnera aphidicola subsp. Acyrthosiphon pisum (strain APS) (Acyrthosiphon pisum symbiotic bacterium).